The chain runs to 722 residues: Transcription factor kayak, isoforms D/sro (722 aa).

Over residues 173 to 188 (QHQTQQQHQSQQQQQH) the composition is skewed to low complexity. Disordered regions lie at residues 173 to 193 (QHQT…RQDY), 283 to 317 (LGQG…HTDS), and 350 to 407 (GSAS…KRRV). Residues 283–300 (LGQGSESEDSNASYNDTQ) show a composition bias toward polar residues. 2 stretches are compositionally biased toward low complexity: residues 308–317 (TDTSSAHTDS) and 350–364 (GSAS…TSNT). The bZIP domain occupies 385–448 (EQKRAVRRER…NQLEYLLATH (64 aa)). The interval 387-406 (KRAVRRERNKQAAARCRKRR) is basic motif. Residues 413 to 420 (LTEEVEQL) form a leucine-zipper region. The segment covering 477–498 (AGSSGSGASSHHNHNSNDSSNG) has biased composition (low complexity). Disordered stretches follow at residues 477–519 (AGSS…PLDL) and 683–722 (DGGT…LVSL). Over residues 506–516 (TLNSTGRSNSP) the composition is skewed to polar residues. Phosphoserine is present on S515.

This sequence belongs to the bZIP family. Fos subfamily. Homodimer. Heterodimer with Jra. The kay-Jra heterodimer binds more stably to the AP-1 site than either of the two proteins alone.

The protein localises to the nucleus. Its function is as follows. Developmentally regulated transcription factor AP-1 binds and recognizes the enhancer DNA sequence: 5'-TGA[CG]TCA-3'. May play a role in the function or determination of a particular subset of cells in the developing embryo. It is able to carry out its function either independently of or in conjunction with Jra. The protein is Transcription factor kayak, isoforms D/sro of Drosophila melanogaster (Fruit fly).